Here is a 452-residue protein sequence, read N- to C-terminus: Phosphoglucosamine mutase (452 aa).

Ser108 functions as the Phosphoserine intermediate in the catalytic mechanism. Mg(2+) contacts are provided by Ser108, Asp247, Asp249, and Asp251. Ser108 bears the Phosphoserine mark.

It belongs to the phosphohexose mutase family. It depends on Mg(2+) as a cofactor. Post-translationally, activated by phosphorylation.

The enzyme catalyses alpha-D-glucosamine 1-phosphate = D-glucosamine 6-phosphate. Its function is as follows. Catalyzes the conversion of glucosamine-6-phosphate to glucosamine-1-phosphate. The polypeptide is Phosphoglucosamine mutase (Burkholderia pseudomallei (strain K96243)).